Reading from the N-terminus, the 143-residue chain is Anti-sigma F factor (143 aa).

It belongs to the anti-sigma-factor family.

The enzyme catalyses L-seryl-[protein] + ATP = O-phospho-L-seryl-[protein] + ADP + H(+). It carries out the reaction L-threonyl-[protein] + ATP = O-phospho-L-threonyl-[protein] + ADP + H(+). In terms of biological role, binds to sigma F and blocks its ability to form an RNA polymerase holoenzyme (E-sigma F). Phosphorylates SpoIIAA on a serine residue. This phosphorylation may enable SpoIIAA to act as an anti-anti-sigma factor that counteracts SpoIIAB and thus releases sigma F from inhibition. This chain is Anti-sigma F factor, found in Clostridium beijerinckii (strain ATCC 51743 / NCIMB 8052) (Clostridium acetobutylicum).